Reading from the N-terminus, the 68-residue chain is Protein P34 (68 aa).

2 helical membrane-spanning segments follow: residues 4–24 and 41–61; these read FVGPIVTVLTAIIGVAILAVL and GFSSMLGTALSPVTGGTGFAM.

The protein resides in the virion membrane. The sequence is that of Protein P34 (XXXIV) from Acinetobacter calcoaceticus (Arthrobacter siderocapsulatus).